The primary structure comprises 520 residues: Peptide chain release factor 3 (520 aa).

The tr-type G domain maps to 8-277; that stretch reads ESRKTFAIIS…HAPMPNARQT (270 aa). GTP contacts are provided by residues 17–24, 85–89, and 139–142; these read SHPDAGKT, DTPGH, and NKLD.

The protein belongs to the TRAFAC class translation factor GTPase superfamily. Classic translation factor GTPase family. PrfC subfamily.

It localises to the cytoplasm. Its function is as follows. Increases the formation of ribosomal termination complexes and stimulates activities of RF-1 and RF-2. It binds guanine nucleotides and has strong preference for UGA stop codons. It may interact directly with the ribosome. The stimulation of RF-1 and RF-2 is significantly reduced by GTP and GDP, but not by GMP. This chain is Peptide chain release factor 3, found in Staphylococcus epidermidis (strain ATCC 35984 / DSM 28319 / BCRC 17069 / CCUG 31568 / BM 3577 / RP62A).